The primary structure comprises 366 residues: RNA 3'-terminal phosphate cyclase (366 aa).

Glutamine 104, proline 131, tyrosine 294, aspartate 297, glutamine 298, and histidine 320 together coordinate ATP. The Tele-AMP-histidine intermediate role is filled by histidine 320.

It belongs to the RNA 3'-terminal cyclase family. Type 1 subfamily.

Its subcellular location is the nucleus. The protein localises to the nucleoplasm. It catalyses the reaction a 3'-end 3'-phospho-ribonucleotide-RNA + ATP = a 3'-end 2',3'-cyclophospho-ribonucleotide-RNA + AMP + diphosphate. In terms of biological role, catalyzes the conversion of 3'-phosphate to a 2',3'-cyclic phosphodiester at the end of RNA. The mechanism of action of the enzyme occurs in 3 steps: (A) adenylation of the enzyme by ATP; (B) transfer of adenylate to an RNA-N3'P to produce RNA-N3'PP5'A; (C) and attack of the adjacent 2'-hydroxyl on the 3'-phosphorus in the diester linkage to produce the cyclic end product. Likely functions in some aspects of cellular RNA processing. Function plays an important role in regulating axon regeneration by inhibiting central nervous system (CNS) axon regeneration following optic nerve injury. This chain is RNA 3'-terminal phosphate cyclase (RTCA), found in Bos taurus (Bovine).